We begin with the raw amino-acid sequence, 435 residues long: Histidinol dehydrogenase (435 aa).

Residues tyrosine 131, glutamine 189, and asparagine 212 each coordinate NAD(+). The substrate site is built by serine 238, glutamine 260, and histidine 263. Positions 260 and 263 each coordinate Zn(2+). Active-site proton acceptor residues include glutamate 327 and histidine 328. Residues histidine 328, aspartate 361, glutamate 415, and histidine 420 each contribute to the substrate site. Residue aspartate 361 participates in Zn(2+) binding. Histidine 420 serves as a coordination point for Zn(2+).

This sequence belongs to the histidinol dehydrogenase family. Homodimer. The cofactor is Zn(2+).

The enzyme catalyses L-histidinol + 2 NAD(+) + H2O = L-histidine + 2 NADH + 3 H(+). It functions in the pathway amino-acid biosynthesis; L-histidine biosynthesis; L-histidine from 5-phospho-alpha-D-ribose 1-diphosphate: step 9/9. In terms of biological role, catalyzes the sequential NAD-dependent oxidations of L-histidinol to L-histidinaldehyde and then to L-histidine. The chain is Histidinol dehydrogenase (hisD) from Buchnera aphidicola subsp. Schizaphis graminum (strain Sg).